Reading from the N-terminus, the 308-residue chain is Alternaria stem canker resistance protein 1 (308 aa).

The next 6 membrane-spanning stretches (helical) occupy residues 21–41 (YQDL…RFIL), 82–102 (FVYF…EPWF), 128–148 (LLYM…LYWE), 165–185 (VSLI…VVLA), 213–233 (FSLF…FWII), and 254–274 (IILY…HLFW). Residues 73-287 (NKFKESAWKF…ILRMVKNQIL (215 aa)) enclose the TLC domain.

The protein resides in the endoplasmic reticulum membrane. Functionally, mediates resistance to sphinganine-analog mycotoxins (SAMs) by restoring the sphingolipid biosynthesis. Could salvage the transport of GPI-anchored proteins from the endoplasmic reticulum to the Golgi apparatus in ceramides-depleted cells after SAM exposure. This is Alternaria stem canker resistance protein 1 from Solanum lycopersicum (Tomato).